Reading from the N-terminus, the 174-residue chain is Probable E3 ubiquitin-protein ligase RHA4A (174 aa).

The RING-type; atypical zinc-finger motif lies at 105–147; that stretch reads CCVCLGEFELKEELVEMPLCKHIFHLDCIHLWLYSHNTCPLCR. Residues 155–174 form a disordered region; it reads TKTSVDDDNDHPDSPQTSPV.

In terms of tissue distribution, expressed in stems, flowers, cauline leaves and roots.

It carries out the reaction S-ubiquitinyl-[E2 ubiquitin-conjugating enzyme]-L-cysteine + [acceptor protein]-L-lysine = [E2 ubiquitin-conjugating enzyme]-L-cysteine + N(6)-ubiquitinyl-[acceptor protein]-L-lysine.. Its pathway is protein modification; protein ubiquitination. Its function is as follows. Probable E3 ubiquitin-protein ligase that may possess E3 ubiquitin ligase activity in vitro. This Arabidopsis thaliana (Mouse-ear cress) protein is Probable E3 ubiquitin-protein ligase RHA4A.